The primary structure comprises 133 residues: Protein FwdD (133 aa).

The protein is Protein FwdD (fwdD) of Methanocaldococcus jannaschii (strain ATCC 43067 / DSM 2661 / JAL-1 / JCM 10045 / NBRC 100440) (Methanococcus jannaschii).